We begin with the raw amino-acid sequence, 523 residues long: Bifunctional purine biosynthesis protein PurH (523 aa).

The MGS-like domain occupies 1-154; that stretch reads MTATAGSNKR…KNHPSVAVVT (154 aa).

Belongs to the PurH family.

The enzyme catalyses (6R)-10-formyltetrahydrofolate + 5-amino-1-(5-phospho-beta-D-ribosyl)imidazole-4-carboxamide = 5-formamido-1-(5-phospho-D-ribosyl)imidazole-4-carboxamide + (6S)-5,6,7,8-tetrahydrofolate. It catalyses the reaction IMP + H2O = 5-formamido-1-(5-phospho-D-ribosyl)imidazole-4-carboxamide. It participates in purine metabolism; IMP biosynthesis via de novo pathway; 5-formamido-1-(5-phospho-D-ribosyl)imidazole-4-carboxamide from 5-amino-1-(5-phospho-D-ribosyl)imidazole-4-carboxamide (10-formyl THF route): step 1/1. Its pathway is purine metabolism; IMP biosynthesis via de novo pathway; IMP from 5-formamido-1-(5-phospho-D-ribosyl)imidazole-4-carboxamide: step 1/1. The chain is Bifunctional purine biosynthesis protein PurH from Streptomyces coelicolor (strain ATCC BAA-471 / A3(2) / M145).